The following is a 104-amino-acid chain: Iron-sulfur cluster assembly protein CyaY (104 aa).

This sequence belongs to the frataxin family.

In terms of biological role, involved in iron-sulfur (Fe-S) cluster assembly. May act as a regulator of Fe-S biogenesis. The chain is Iron-sulfur cluster assembly protein CyaY from Aliivibrio fischeri (strain ATCC 700601 / ES114) (Vibrio fischeri).